The sequence spans 241 residues: DNA repair protein RecO (241 aa).

Belongs to the RecO family.

In terms of biological role, involved in DNA repair and RecF pathway recombination. This chain is DNA repair protein RecO, found in Rickettsia bellii (strain OSU 85-389).